Reading from the N-terminus, the 794-residue chain is Copper amine oxidase-like protein cao2 (794 aa).

Substrate-binding positions include 307 to 318 (AYDLGEYGVGYR) and 391 to 396 (AANYEY). Aspartate 309 serves as the catalytic Proton acceptor. Tyrosine 394 acts as the Schiff-base intermediate with substrate; via topaquinone in catalysis. A 2',4',5'-topaquinone modification is found at tyrosine 394. Cu cation contacts are provided by histidine 445 and histidine 447. The tract at residues 563–584 (GDYAPQASDDTPKGLSKWISDD) is disordered. Positions 593 and 594 each coordinate Mn(2+). Histidine 604 provides a ligand contact to Cu cation. Residues 634 to 748 (ALDTSSSVNS…NGGHHHHHHH (115 aa)) are disordered. Residues 637–649 (TSSSVNSTSEATS) show a composition bias toward low complexity. The segment covering 652–714 (THHENLRDTS…DAAQKHEGRS (63 aa)) has biased composition (basic and acidic residues). Residues 716–727 (TLAQPGQQNANQ) are compositionally biased toward polar residues.

It belongs to the copper/topaquinone oxidase family. In terms of assembly, homodimer. Cu cation is required as a cofactor. Zn(2+) serves as cofactor. Requires L-topaquinone as cofactor. The cofactor is Mn(2+). In terms of processing, topaquinone (TPQ) is generated by copper-dependent autoxidation of a specific tyrosyl residue.

It is found in the cytoplasm. It carries out the reaction a primary methyl amine + O2 + H2O = an aldehyde + H2O2 + NH4(+). In terms of biological role, copper amine oxidase-like protein that does not show any copper amine oxidase activity. May be the appropriate amine substrate for cao2 has not been identified yet. The chain is Copper amine oxidase-like protein cao2 (cao2) from Schizosaccharomyces pombe (strain 972 / ATCC 24843) (Fission yeast).